The following is a 354-amino-acid chain: Putative F-box/kelch-repeat protein At5g03000 (354 aa).

In terms of domain architecture, F-box spans 37–86 (PTVFSSLPDELILNCLARVSRFYRPSLSLVNKEFQSLIASPDLEATRSRI). 2 Kelch repeats span residues 143–189 (EIYI…VIDG) and 190–236 (KIYV…FPGK).

This is Putative F-box/kelch-repeat protein At5g03000 from Arabidopsis thaliana (Mouse-ear cress).